A 275-amino-acid chain; its full sequence is T-cell ecto-ADP-ribosyltransferase 2 (275 aa).

An N-terminal signal peptide occupies residues 1–20; sequence MPSNICKFFLTWWLIQQVTG. Intrachain disulfides connect Cys41-Cys243 and Cys141-Cys193. A TR mART core domain is found at 61-238; sequence AKLKVAWEEA…IFLDSPKRKK (178 aa). Residues Tyr98, Arg146, and Gln164 each contribute to the NAD(+) site. Arg146 is an active-site residue. Ser167 is an active-site residue. NAD(+) is bound at residue Ser202. Position 204 is an ADP-ribosylarginine; by autocatalysis (Arg204). Residue Glu209 is part of the active site. Ser246 is lipidated: GPI-anchor amidated serine. Positions 247 to 275 are cleaved as a propeptide — removed in mature form; sequence SAGARESCVSLFLVVLPSLLVQLLCLAEP.

This sequence belongs to the Arg-specific ADP-ribosyltransferase family. As to expression, postthymic T-cells.

It is found in the cell membrane. The enzyme catalyses L-arginyl-[protein] + NAD(+) = N(omega)-(ADP-D-ribosyl)-L-arginyl-[protein] + nicotinamide + H(+). It catalyses the reaction NAD(+) + H2O = ADP-D-ribose + nicotinamide + H(+). In terms of biological role, has both NAD(+) glycohydrolase and ADP-ribosyltransferase activity (to a lesser extent). The polypeptide is T-cell ecto-ADP-ribosyltransferase 2 (Art2b) (Rattus norvegicus (Rat)).